The following is a 259-amino-acid chain: tRNA pseudouridine synthase A (259 aa).

Catalysis depends on Asp-52, which acts as the Nucleophile. Residue Tyr-113 coordinates substrate.

This sequence belongs to the tRNA pseudouridine synthase TruA family. In terms of assembly, homodimer.

It catalyses the reaction uridine(38/39/40) in tRNA = pseudouridine(38/39/40) in tRNA. In terms of biological role, formation of pseudouridine at positions 38, 39 and 40 in the anticodon stem and loop of transfer RNAs. The chain is tRNA pseudouridine synthase A from Allorhizobium ampelinum (strain ATCC BAA-846 / DSM 112012 / S4) (Agrobacterium vitis (strain S4)).